The primary structure comprises 395 residues: General transcription factor IIH subunit 2 (395 aa).

In terms of domain architecture, VWFA spans 60–236 (HLYVVVDGSR…HYKELLTHHV (177 aa)). Position 95 is a phosphotyrosine (Tyr95). The C4-type zinc finger occupies 291–308 (CPQCRAKYCELPVECKIC).

Belongs to the GTF2H2 family. As to quaternary structure, component of the TFIID-containing RNA polymerase II pre-initiation complex that is composed of TBP and at least GTF2A1, GTF2A2, GTF2E1, GTF2E2, GTF2F1, GTF2H2, GTF2H3, GTF2H4, GTF2H5, GTF2B, TCEA1, ERCC2 and ERCC3. Component of the 7-subunit TFIIH core complex composed of XPB/ERCC3, XPD/ERCC2, GTF2H1, GTF2H2, GTF2H3, GTF2H4 and GTF2H5, which is active in NER. The core complex associates with the 3-subunit CDK-activating kinase (CAK) module composed of CCNH/cyclin H, CDK7 and MNAT1 to form the 10-subunit holoenzyme (holo-TFIIH) active in transcription. Interacts with XPB, XPD, GTF2H1 and GTF2H3.

Its subcellular location is the nucleus. Component of the general transcription and DNA repair factor IIH (TFIIH) core complex, which is involved in general and transcription-coupled nucleotide excision repair (NER) of damaged DNA and, when complexed to CAK, in RNA transcription by RNA polymerase II. In NER, TFIIH acts by opening DNA around the lesion to allow the excision of the damaged oligonucleotide and its replacement by a new DNA fragment. In transcription, TFIIH has an essential role in transcription initiation. When the pre-initiation complex (PIC) has been established, TFIIH is required for promoter opening and promoter escape. Phosphorylation of the C-terminal tail (CTD) of the largest subunit of RNA polymerase II by the kinase module CAK controls the initiation of transcription. The N-terminus of GTF2H2 interacts with and regulates XPD whereas an intact C-terminus is required for a successful escape of RNAP II form the promoter. The sequence is that of General transcription factor IIH subunit 2 (GTF2H2) from Bos taurus (Bovine).